Reading from the N-terminus, the 289-residue chain is Shikimate dehydrogenase (NADP(+)) (289 aa).

Residues 22 to 24 (SRS) and threonine 69 each bind shikimate. Lysine 73 serves as the catalytic Proton acceptor. Glutamate 85 is a binding site for NADP(+). Residues asparagine 94 and aspartate 109 each coordinate shikimate. Residues 134–138 (GAGGA), 158–163 (NRTLSR), and isoleucine 226 contribute to the NADP(+) site. Tyrosine 228 provides a ligand contact to shikimate. An NADP(+)-binding site is contributed by glycine 249.

Belongs to the shikimate dehydrogenase family. As to quaternary structure, homodimer.

It carries out the reaction shikimate + NADP(+) = 3-dehydroshikimate + NADPH + H(+). The protein operates within metabolic intermediate biosynthesis; chorismate biosynthesis; chorismate from D-erythrose 4-phosphate and phosphoenolpyruvate: step 4/7. Functionally, involved in the biosynthesis of the chorismate, which leads to the biosynthesis of aromatic amino acids. Catalyzes the reversible NADPH linked reduction of 3-dehydroshikimate (DHSA) to yield shikimate (SA). This Brucella ovis (strain ATCC 25840 / 63/290 / NCTC 10512) protein is Shikimate dehydrogenase (NADP(+)).